The primary structure comprises 645 residues: MSLSANISVEAPIENQIQEIAYDGTEIYQLPPTLSEHLAKCATKIDFSKTSSDIDLLQQSIKKEDEKKEEESKDPKEQFQSSLWPWDSVRNKLKEALTEVCVLSDVLNIAKEKRYMVLDPIPQEPPEVKQMVLVYARKKALASAANILQSGVERLKAVQSDQGVSRSNSTDFHIELLRLRRNWRLKKVSNTIIGDLSYRTAGSKFMHPGMFEVTKAEDEESGSPPASPSGSGAAGTVACPKINSALRVNVPTELQGVAFIKVITQKDQEDLCTATVNMMGSTQLVPQAGAWQQTLEYAQNVLFCKELFNQLAREAVQLQAPIPHVVVGNQIRATLLPGIQLIISLCHSTSSDSNNSSEPIKDHDHVLEHSLHQLLREFHHKNTHHPFPHPASGPLGPSKKRMLAGPSAYDRHELLEMTKSQTLLEQIIAQAQHIFTRRRTQYVLDTVARDVKDPMITSHWNAMNSPTMSCVKINITSHGYDANLRTSLVIHVKERSLKCICRDGRIMHMSYEPQELRDLILCQISQHQIVCLQNLAKCMAWQILSSSSHLGIGSVEPLGNASSCVLASPNSDRLIAVQVRCDSQIDVKVFIAQSPAKDFFPGSLVQGRHWEHLGGHFKEVRFDKMEGKNFHNKMEFLMASLTSQS.

The segment at 215–234 is disordered; that stretch reads KAEDEESGSPPASPSGSGAA. Over residues 222–234 the composition is skewed to low complexity; that stretch reads GSPPASPSGSGAA.

Belongs to the Mediator complex subunit 17 family. In terms of assembly, component of the Mediator complex.

It is found in the nucleus. In terms of biological role, component of the Mediator complex, a coactivator involved in the regulated transcription of nearly all RNA polymerase II-dependent genes. Mediator functions as a bridge to convey information from gene-specific regulatory proteins to the basal RNA polymerase II transcription machinery. Mediator is recruited to promoters by direct interactions with regulatory proteins and serves as a scaffold for the assembly of a functional preinitiation complex with RNA polymerase II and the general transcription factors. The polypeptide is Mediator of RNA polymerase II transcription subunit 17 (MED17) (Anopheles gambiae (African malaria mosquito)).